Reading from the N-terminus, the 65-residue chain is Large ribosomal subunit protein uL29 (65 aa).

The protein belongs to the universal ribosomal protein uL29 family.

The polypeptide is Large ribosomal subunit protein uL29 (Dehalococcoides mccartyi (strain ATCC BAA-2100 / JCM 16839 / KCTC 5957 / BAV1)).